Here is a 134-residue protein sequence, read N- to C-terminus: Holo-[acyl-carrier-protein] synthase (134 aa).

Residues D8 and E56 each coordinate Mg(2+).

This sequence belongs to the P-Pant transferase superfamily. AcpS family. Mg(2+) is required as a cofactor.

Its subcellular location is the cytoplasm. The enzyme catalyses apo-[ACP] + CoA = holo-[ACP] + adenosine 3',5'-bisphosphate + H(+). Transfers the 4'-phosphopantetheine moiety from coenzyme A to a Ser of acyl-carrier-protein. The sequence is that of Holo-[acyl-carrier-protein] synthase from Clostridium kluyveri (strain ATCC 8527 / DSM 555 / NBRC 12016 / NCIMB 10680 / K1).